The chain runs to 266 residues: Hydroxyethylthiazole kinase (266 aa).

Residue Met-45 coordinates substrate. ATP-binding residues include Arg-120 and Thr-165. Residue Ala-192 coordinates substrate.

This sequence belongs to the Thz kinase family. It depends on Mg(2+) as a cofactor.

The catalysed reaction is 5-(2-hydroxyethyl)-4-methylthiazole + ATP = 4-methyl-5-(2-phosphooxyethyl)-thiazole + ADP + H(+). The protein operates within cofactor biosynthesis; thiamine diphosphate biosynthesis; 4-methyl-5-(2-phosphoethyl)-thiazole from 5-(2-hydroxyethyl)-4-methylthiazole: step 1/1. In terms of biological role, catalyzes the phosphorylation of the hydroxyl group of 4-methyl-5-beta-hydroxyethylthiazole (THZ). In Psychrobacter sp. (strain PRwf-1), this protein is Hydroxyethylthiazole kinase.